A 368-amino-acid chain; its full sequence is Mitogen-activated protein kinase 7 (368 aa).

The 288-residue stretch at 32-319 (YVPIKPIGRG…VTDALLHPYM (288 aa)) folds into the Protein kinase domain. ATP-binding positions include 38 to 46 (IGRGAYGVV) and Lys61. Asp158 serves as the catalytic Proton acceptor. Thr191 is subject to Phosphothreonine. Positions 191–193 (TEY) match the TXY motif. Position 193 is a phosphotyrosine (Tyr193). Residue Thr196 is modified to Phosphothreonine.

It belongs to the protein kinase superfamily. CMGC Ser/Thr protein kinase family. MAP kinase subfamily. In terms of assembly, interacts with MKK3. The cofactor is Mg(2+). Dually phosphorylated on Thr-191 and Tyr-193, which activates the enzyme.

It carries out the reaction L-seryl-[protein] + ATP = O-phospho-L-seryl-[protein] + ADP + H(+). The catalysed reaction is L-threonyl-[protein] + ATP = O-phospho-L-threonyl-[protein] + ADP + H(+). With respect to regulation, activated by threonine and tyrosine phosphorylation. Activated in response to hydrogen peroxide. Activation is triggered by MAPKKK17 and MAPKKK18 in a MKK3-dependent manner. In terms of biological role, MKK3-MPK7 module acts as a positive regulator of PR1 gene expression. This is Mitogen-activated protein kinase 7 (MPK7) from Arabidopsis thaliana (Mouse-ear cress).